The chain runs to 485 residues: Glutamate--tRNA ligase (485 aa).

The 'HIGH' region signature appears at 11–21; it reads PSPTGHLHIGN. The 'KMSKS' region motif lies at 252-256; sequence KLSKR. ATP is bound at residue Lys255.

This sequence belongs to the class-I aminoacyl-tRNA synthetase family. Glutamate--tRNA ligase type 1 subfamily. In terms of assembly, monomer.

The protein localises to the cytoplasm. The catalysed reaction is tRNA(Glu) + L-glutamate + ATP = L-glutamyl-tRNA(Glu) + AMP + diphosphate. Its function is as follows. Catalyzes the attachment of glutamate to tRNA(Glu) in a two-step reaction: glutamate is first activated by ATP to form Glu-AMP and then transferred to the acceptor end of tRNA(Glu). The sequence is that of Glutamate--tRNA ligase from Bacillus cytotoxicus (strain DSM 22905 / CIP 110041 / 391-98 / NVH 391-98).